The following is a 551-amino-acid chain: MFS-type transporter ATEG_00331 (551 aa).

The N-terminal stretch at 1–18 (MKAWLLVSSLCLSTFIAA) is a signal peptide. 4 helical membrane-spanning segments follow: residues 40-60 (LEFT…TPPW), 71-91 (PVLM…ALAI), 102-122 (IQGT…GDVF), and 132-152 (GVLG…GGAF). Asn165 and Asn178 each carry an N-linked (GlcNAc...) asparagine glycan. The next 8 helical transmembrane spans lie at 179–199 (LTTS…FLEV), 206–228 (IIEG…TVMF), 233–255 (GYGG…FGIG), 324–344 (VYLL…GLYI), 354–374 (IYFG…LQPY), 380–400 (IIIF…APII), 417–437 (TVFF…GVIF), and 493–513 (SEWI…VFIS). Residue Asn524 is glycosylated (N-linked (GlcNAc...) asparagine).

The protein belongs to the major facilitator superfamily. TCR/Tet family.

The protein localises to the membrane. In terms of biological role, MFS-type transporter; part of the gene cluster that mediates the biosynthesis of isoflavipucine. This Aspergillus terreus (strain NIH 2624 / FGSC A1156) protein is MFS-type transporter ATEG_00331.